The following is an 879-amino-acid chain: Translation initiation factor IF-2 (879 aa).

Disordered stretches follow at residues 45–216 and 228–293; these read AGHM…ERKR and SYEE…EKPV. Composition is skewed to basic and acidic residues over residues 60 to 72, 83 to 99, and 107 to 163; these read NAAKSDNKSDKNS, RKTDARKSQSSEKKISP, and AEKK…ERLQ. The span at 164 to 173 shows a compositional bias: low complexity; it reads MEAALQAQMQ. Composition is skewed to basic and acidic residues over residues 174–216, 228–271, and 280–291; these read EQER…ERKR, SYEE…ERRN, and RNNDNKKGKFEK. The tr-type G domain occupies 380-549; the sequence is VRAPVVTIMG…LIQAEMLELT (170 aa). Residues 389 to 396 are G1; that stretch reads GHVDHGKT. 389–396 lines the GTP pocket; sequence GHVDHGKT. The G2 stretch occupies residues 414–418; the sequence is GITQH. A G3 region spans residues 435–438; that stretch reads DTPG. GTP contacts are provided by residues 435–439 and 489–492; these read DTPGH and NKMD. The tract at residues 489-492 is G4; it reads NKMD. Positions 525-527 are G5; the sequence is SAK.

The protein belongs to the TRAFAC class translation factor GTPase superfamily. Classic translation factor GTPase family. IF-2 subfamily.

It localises to the cytoplasm. Functionally, one of the essential components for the initiation of protein synthesis. Protects formylmethionyl-tRNA from spontaneous hydrolysis and promotes its binding to the 30S ribosomal subunits. Also involved in the hydrolysis of GTP during the formation of the 70S ribosomal complex. The polypeptide is Translation initiation factor IF-2 (Dichelobacter nodosus (strain VCS1703A)).